A 359-amino-acid chain; its full sequence is Src kinase-associated phosphoprotein 1 (359 aa).

The PH domain maps to 107-210 (NVIKQGYLEK…WVDQISFLLK (104 aa)). Y142, Y219, and Y232 each carry phosphotyrosine. The segment covering 219–237 (YEEDEEEEEKEETYDDIDG) has biased composition (acidic residues). Residues 219 to 239 (YEEDEEEEEKEETYDDIDGFD) form a disordered region. Residues Y271 and Y295 each carry the phosphotyrosine; by FYN modification. Positions 290–295 (RKGVDY) are interaction with FYB1. The region spanning 294–355 (DYASYYQGLW…PKEYLTTAFE (62 aa)) is the SH3 domain.

Belongs to the SKAP family. Homodimer. Interacts with FYN. Interacts with PTPRC. Interacts with GRB2 when phosphorylated on Tyr-271. Interacts with FYB1, which is required for SKAP2 protein stability. Part of a complex consisting of SKAP1, FYB1 and CLNK. Interacts with RASGRP1. Interacts with FYB2. In terms of processing, phosphorylated on tyrosines. Phosphorylation by FYN on Tyr-271 is required for GRB2 interaction. Phosphorylation by FYN on Tyr-295 abolishes interaction with FYB1. Tyr-232 is dephosphorylated by PTPRC. Highly expressed in thymocytes and peripheral blood lymphocytes. Also expressed in spleen cells and testis. Present in T-cells (at protein level).

Its subcellular location is the cytoplasm. It is found in the nucleus. The protein localises to the cell membrane. Positively regulates T-cell receptor signaling by enhancing the MAP kinase pathway. Required for optimal conjugation between T-cells and antigen-presenting cells by promoting the clustering of integrin ITGAL on the surface of T-cells. May be involved in high affinity immunoglobulin epsilon receptor signaling in mast cells. This chain is Src kinase-associated phosphoprotein 1 (SKAP1), found in Homo sapiens (Human).